We begin with the raw amino-acid sequence, 259 residues long: Imidazole glycerol phosphate synthase subunit HisF (259 aa).

Residues Asp11 and Asp130 contribute to the active site.

This sequence belongs to the HisA/HisF family. Heterodimer of HisH and HisF.

The protein localises to the cytoplasm. It carries out the reaction 5-[(5-phospho-1-deoxy-D-ribulos-1-ylimino)methylamino]-1-(5-phospho-beta-D-ribosyl)imidazole-4-carboxamide + L-glutamine = D-erythro-1-(imidazol-4-yl)glycerol 3-phosphate + 5-amino-1-(5-phospho-beta-D-ribosyl)imidazole-4-carboxamide + L-glutamate + H(+). It functions in the pathway amino-acid biosynthesis; L-histidine biosynthesis; L-histidine from 5-phospho-alpha-D-ribose 1-diphosphate: step 5/9. Its function is as follows. IGPS catalyzes the conversion of PRFAR and glutamine to IGP, AICAR and glutamate. The HisF subunit catalyzes the cyclization activity that produces IGP and AICAR from PRFAR using the ammonia provided by the HisH subunit. This chain is Imidazole glycerol phosphate synthase subunit HisF, found in Syntrophobacter fumaroxidans (strain DSM 10017 / MPOB).